A 151-amino-acid polypeptide reads, in one-letter code: UPF0208 membrane protein YE1335 (151 aa).

2 consecutive transmembrane segments (helical) span residues 46–66 (FGIR…IALG) and 69–89 (LGPA…GLWW).

The protein belongs to the UPF0208 family.

Its subcellular location is the cell inner membrane. The chain is UPF0208 membrane protein YE1335 from Yersinia enterocolitica serotype O:8 / biotype 1B (strain NCTC 13174 / 8081).